An 833-amino-acid polypeptide reads, in one-letter code: Transcription factor MBP1 (833 aa).

The HTH APSES-type domain maps to 5–111 (IYSARYSGVD…FTQTDGSASP (107 aa)). A DNA-binding region (H-T-H motif) is located at residues 36-57 (ATHILKAANFAKAKRTRILEKE). Disordered regions lie at residues 104–223 (QTDG…QSPT) and 280–329 (QQSS…SPII). S110 bears the Phosphoserine mark. Over residues 115–129 (PKHHHASKVDRKKAI) the composition is skewed to basic residues. A compositionally biased stretch (basic and acidic residues) spans 139-149 (ETKRNNKKAEE). Polar residues predominate over residues 201–223 (PNSSISTTQLPSIRSTMGPQSPT). Over residues 280–307 (QQSSLIQTQQTESMATSVSSSPSLPTSP) the composition is skewed to low complexity. At T325 the chain carries Phosphothreonine. Residues S326 and S330 each carry the phosphoserine modification. 2 ANK repeats span residues 394-423 (ELHTAFHWACSMGNLPIAEALYEAGTSIRS) and 512-541 (NGDTALHIASKNGDVVFFNTLVKMGALTTI). S827 is modified (phosphoserine).

Component of the transcription complex MCB-binding factor (MBF) composed of SWI6 and MBP1. Interacts with MSA1.

It localises to the nucleus. Functionally, binds to MCB elements (Mlu I cell cycle box) found in the promoter of most DNA synthesis genes. Transcriptional activation by MBF has an important role in the transition from G1 to S phase. It may have a dual role in that it behaves as an activator of transcription at the G1-S boundary and as a repressor during other stages of the cell cycle. This Saccharomyces cerevisiae (strain ATCC 204508 / S288c) (Baker's yeast) protein is Transcription factor MBP1 (MBP1).